Reading from the N-terminus, the 675-residue chain is Gastrula zinc finger protein xFG20-1 (675 aa).

10 consecutive C2H2-type zinc fingers follow at residues 62–84 (FTCTECGKTFTRKPNYESHIRAH), 90–112 (FSCMVCDKAFAWKSNLLVHYSVH), 118–140 (FSCTECDKTFSNKAQLEKHLRVH), 146–168 (YSCEQCGKSFAHKCVLDSHQRTH), 174–196 (FSCTECGKKFSQRGNLHKHLKTH), 202–224 (HLCAECGKTFSFKSTLLEHQKIH), 257–279 (FPCTECGEIFSNEHELLTHQSTH), 286–308 (FPCTKCWGIFSNEHELRTHQSTH), 344–366 (LPCTECGGTFTNEQELLAHQSTH), and 373–395 (LPCTECGEIFSDEHELLTHQSTH). The segment at 302–325 (RTHQSTHTEGQKSLPSTESGGTFS) is disordered. Residues 304–325 (HQSTHTEGQKSLPSTESGGTFS) show a composition bias toward polar residues. Polar residues predominate over residues 390–407 (THQSTHTSPSTEFGVQTT). The segment at 390 to 423 (THQSTHTSPSTEFGVQTTEDNHQSPSKDHTGEKP) is disordered. Over residues 408 to 421 (EDNHQSPSKDHTGE) the composition is skewed to basic and acidic residues. 8 C2H2-type zinc fingers span residues 424 to 446 (FSCSECGKSFFYKSVLKDHLVVH), 452 to 474 (YHCIECGRSYTHQSSLKSHQRTH), 480 to 501 (FSCNLCDKLSIISKLRLHYRVH), 507 to 529 (YPCTECDKTFTKKEQLESHYKVH), 535 to 557 (YPCQQCGKSFSHKSVLKLHLRTH), 563 to 585 (FSCTECGKTFTRKPNYESHLTTH), 591 to 613 (FSCTECGKEFAWKRNLEAHYKMH), and 619 to 642 (FTCTECGKTFTWKSNLRSHYTTVH).

The protein belongs to the krueppel C2H2-type zinc-finger protein family.

The protein localises to the nucleus. May be involved in transcriptional regulation. The chain is Gastrula zinc finger protein xFG20-1 from Xenopus laevis (African clawed frog).